A 230-amino-acid polypeptide reads, in one-letter code: RNA chaperone ProQ (230 aa).

A disordered region spans residues 104-176 (AEAKARVQAQ…APRQNTEKLT (73 aa)). A compositionally biased stretch (basic and acidic residues) spans 115 to 132 (AEQRAKKREAEGDKETSK).

This sequence belongs to the ProQ family.

The protein localises to the cytoplasm. In terms of biological role, RNA chaperone with significant RNA binding, RNA strand exchange and RNA duplexing activities. May regulate ProP activity through an RNA-based, post-transcriptional mechanism. This is RNA chaperone ProQ from Proteus mirabilis (strain HI4320).